Reading from the N-terminus, the 96-residue chain is Prokineticin Bm8-f (96 aa).

The N-terminal stretch at 1–19 (MKCFAQIVVLLLVIAFSHG) is a signal peptide. 5 disulfide bridges follow: C26–C38, C32–C50, C37–C78, C60–C86, and C80–C95.

It belongs to the AVIT (prokineticin) family. As to expression, expressed by the skin glands.

It is found in the secreted. Its function is as follows. Potent agonist for both PKR1/PROKR1 and PKR2/PROKR2, and inducer of a potent and long-lasting hyperalgesia. Also potentiates capsaicin-induced TRPV1 current, when tested on DRG neurons. At subnanomolar concentrations, this protein both induces potent chemotaxis of macrophages and stimulates LPS-induced production of the pro-inflammatory cytokines IL-1 and IL-12. In vivo, potently stimulates the contraction of the guinea-pig gastrointestinal (GI) smooth muscle (nanomolar concentration). The polypeptide is Prokineticin Bm8-f (Bombina maxima (Giant fire-bellied toad)).